The sequence spans 244 residues: Putative B3 domain-containing protein At2g31460 (244 aa).

The segment at residues 49 to 147 (SSMHMENSGF…PVHDGVNLSG (99 aa)) is a DNA-binding region (TF-B3). 2 disordered regions span residues 175 to 196 (DGNLPQDSGHDGHNDNLPQDSV) and 217 to 244 (DSQGYLPDEDEDFGFNDDGSIRDSGHYQ). Basic and acidic residues predominate over residues 235–244 (GSIRDSGHYQ).

The protein resides in the nucleus. The chain is Putative B3 domain-containing protein At2g31460 from Arabidopsis thaliana (Mouse-ear cress).